A 302-amino-acid chain; its full sequence is Phosphoribosylaminoimidazole-succinocarboxamide synthase (302 aa).

It belongs to the SAICAR synthetase family.

It catalyses the reaction 5-amino-1-(5-phospho-D-ribosyl)imidazole-4-carboxylate + L-aspartate + ATP = (2S)-2-[5-amino-1-(5-phospho-beta-D-ribosyl)imidazole-4-carboxamido]succinate + ADP + phosphate + 2 H(+). It functions in the pathway purine metabolism; IMP biosynthesis via de novo pathway; 5-amino-1-(5-phospho-D-ribosyl)imidazole-4-carboxamide from 5-amino-1-(5-phospho-D-ribosyl)imidazole-4-carboxylate: step 1/2. The protein is Phosphoribosylaminoimidazole-succinocarboxamide synthase of Polaromonas sp. (strain JS666 / ATCC BAA-500).